We begin with the raw amino-acid sequence, 412 residues long: Gamma-glutamyl phosphate reductase (412 aa).

This sequence belongs to the gamma-glutamyl phosphate reductase family.

The protein resides in the cytoplasm. It carries out the reaction L-glutamate 5-semialdehyde + phosphate + NADP(+) = L-glutamyl 5-phosphate + NADPH + H(+). It participates in amino-acid biosynthesis; L-proline biosynthesis; L-glutamate 5-semialdehyde from L-glutamate: step 2/2. Its function is as follows. Catalyzes the NADPH-dependent reduction of L-glutamate 5-phosphate into L-glutamate 5-semialdehyde and phosphate. The product spontaneously undergoes cyclization to form 1-pyrroline-5-carboxylate. This Bartonella quintana (strain Toulouse) (Rochalimaea quintana) protein is Gamma-glutamyl phosphate reductase.